A 397-amino-acid chain; its full sequence is Succinyl-diaminopimelate desuccinylase (397 aa).

A Zn(2+)-binding site is contributed by H74. D76 is an active-site residue. A Zn(2+)-binding site is contributed by D107. Residue E141 is the Proton acceptor of the active site. Positions 142, 170, and 368 each coordinate Zn(2+).

Belongs to the peptidase M20A family. DapE subfamily. As to quaternary structure, homodimer. Zn(2+) is required as a cofactor. It depends on Co(2+) as a cofactor.

The enzyme catalyses N-succinyl-(2S,6S)-2,6-diaminopimelate + H2O = (2S,6S)-2,6-diaminopimelate + succinate. It functions in the pathway amino-acid biosynthesis; L-lysine biosynthesis via DAP pathway; LL-2,6-diaminopimelate from (S)-tetrahydrodipicolinate (succinylase route): step 3/3. Catalyzes the hydrolysis of N-succinyl-L,L-diaminopimelic acid (SDAP), forming succinate and LL-2,6-diaminopimelate (DAP), an intermediate involved in the bacterial biosynthesis of lysine and meso-diaminopimelic acid, an essential component of bacterial cell walls. In Mesorhizobium japonicum (strain LMG 29417 / CECT 9101 / MAFF 303099) (Mesorhizobium loti (strain MAFF 303099)), this protein is Succinyl-diaminopimelate desuccinylase.